The sequence spans 276 residues: MAVKIYKRTTNGRRNMSVLTFDEITTSTPEKSLLAPITKTGGRNNQGKLTVRHIGGGAKRKYRIIDFKRDKDNVPGKVTSIEYDPNRTANIALITYLDGEKRYIIAPKGLQVGALIVSGSEIDIKVGNALPVMSIPVGTIVHNIELKPGRGGQIARSAGTSAQILGREEKYVLVRLQSGEVRRILGTCKATIGEVGNESHELVRIGKAGRTRHLGVRPTVRGSVMNPNDHPHGGGEGKQPIGRKQQMTPWGKKARGIKTRDKKKASTSMIVRRRNG.

The segment at 219–276 is disordered; the sequence is TVRGSVMNPNDHPHGGGEGKQPIGRKQQMTPWGKKARGIKTRDKKKASTSMIVRRRNG. The segment covering 252-276 has biased composition (basic residues); it reads KKARGIKTRDKKKASTSMIVRRRNG.

It belongs to the universal ribosomal protein uL2 family. As to quaternary structure, part of the 50S ribosomal subunit. Forms a bridge to the 30S subunit in the 70S ribosome.

One of the primary rRNA binding proteins. Required for association of the 30S and 50S subunits to form the 70S ribosome, for tRNA binding and peptide bond formation. It has been suggested to have peptidyltransferase activity; this is somewhat controversial. Makes several contacts with the 16S rRNA in the 70S ribosome. This is Large ribosomal subunit protein uL2 from Acholeplasma laidlawii (strain PG-8A).